Here is a 386-residue protein sequence, read N- to C-terminus: Cytochrome b (386 aa).

Transmembrane regions (helical) follow at residues 32-52 (LGSL…FLAM), 76-98 (WFIR…IHIG), 113-133 (VWNV…LGYC), and 179-199 (FFAF…MHFM). Heme b contacts are provided by histidine 82 and histidine 96. Positions 183 and 197 each coordinate heme b. Histidine 202 contributes to the a ubiquinone binding site. 4 helical membrane-spanning segments follow: residues 225 to 245 (FIFK…LFVF), 289 to 309 (LLGV…PITD), 321 to 341 (FSKF…HLGE), and 348 to 368 (FVVM…VIVP).

It belongs to the cytochrome b family. In terms of assembly, fungal cytochrome b-c1 complex contains 10 subunits; 3 respiratory subunits, 2 core proteins and 5 low-molecular weight proteins. Cytochrome b-c1 complex is a homodimer. The cofactor is heme b.

It is found in the mitochondrion inner membrane. Component of the ubiquinol-cytochrome c reductase complex (complex III or cytochrome b-c1 complex) that is part of the mitochondrial respiratory chain. The b-c1 complex mediates electron transfer from ubiquinol to cytochrome c. Contributes to the generation of a proton gradient across the mitochondrial membrane that is then used for ATP synthesis. The protein is Cytochrome b (COB) of Kluyveromyces lactis (strain ATCC 8585 / CBS 2359 / DSM 70799 / NBRC 1267 / NRRL Y-1140 / WM37) (Yeast).